Here is a 439-residue protein sequence, read N- to C-terminus: Proline--tRNA ligase (439 aa).

It belongs to the class-II aminoacyl-tRNA synthetase family. ProS type 2 subfamily. As to quaternary structure, homodimer.

The protein localises to the cytoplasm. The enzyme catalyses tRNA(Pro) + L-proline + ATP = L-prolyl-tRNA(Pro) + AMP + diphosphate. Catalyzes the attachment of proline to tRNA(Pro) in a two-step reaction: proline is first activated by ATP to form Pro-AMP and then transferred to the acceptor end of tRNA(Pro). The polypeptide is Proline--tRNA ligase (Parvibaculum lavamentivorans (strain DS-1 / DSM 13023 / NCIMB 13966)).